The following is a 1583-amino-acid chain: Methyl-CpG-binding domain protein 5/6 homolog sba (1583 aa).

Residues 81-115 form a disordered region; the sequence is AVHQQQQQHHHQQQQQQQHQQQQQILPAGLVNGNG. Low complexity predominate over residues 83–104; sequence HQQQQQHHHQQQQQQQHQQQQQ. Residues 238 to 308 form the MBD domain; it reads RKTATSYNGN…YLFDFNAQVP (71 aa). Disordered stretches follow at residues 427–457, 556–579, 630–694, 839–862, 940–980, 1179–1247, and 1287–1339; these read NKLP…PTSQ, EPIV…QQQL, VTLV…QTQV, AELH…AASS, PPAQ…ISPQ, VMSR…RSIC, and QESP…SFPL. Over residues 430–439 the composition is skewed to low complexity; it reads PATNRTATTP. Residues 440 to 449 show a composition bias toward pro residues; sequence TPAPTPPPQH. The span at 563 to 579 shows a compositional bias: low complexity; it reads QQQQQQQQQQLQQQQQL. Positions 658–677 are enriched in polar residues; the sequence is AISTSHESPRQSLSSPTDSV. 2 stretches are compositionally biased toward low complexity: residues 679 to 693 and 851 to 862; these read SAKS…PQTQ and VSQPSPVAAASS. Polar residues-rich tracts occupy residues 1179 to 1195, 1216 to 1240, and 1287 to 1313; these read VMSR…TTTC, CVSS…PSST, and QESP…TVRT. The span at 1323–1333 shows a compositional bias: low complexity; the sequence is RGAARAAPSAS. In terms of domain architecture, PWWP spans 1346-1408; it reads IGELIWGPAR…VNSLQSLSEG (63 aa). Positions 1415–1446 form a coiled coil; that stretch reads AQKDTRKSRKLNSQLERAIQEAMTELDNISAS. The disordered stretch occupies residues 1471–1497; that stretch reads IGGQQQYQQQQQQQQQQQSPSSTNNKI. The span at 1474-1488 shows a compositional bias: low complexity; the sequence is QQQYQQQQQQQQQQQ.

In terms of assembly, component of the polycomb repressive deubiquitinase (PR-DUB) complex, at least composed of caly/calypso, Asx and sba (MDB5/6 homolog). Interacts (via MBD domain) with Asx (via PHD domain); the interaction is important for the stability of the PR-DUB complex.

Non-catalytic component of the polycomb repressive deubiquitinase (PR-DUB) complex, a complex that specifically mediates deubiquitination of histone H2A monoubiquitinated at 'Lys-119' (H2AK118ub1). Important for maintaining stability of the PR-DUB complex. Probable epigenetic regulator involved in developmental pattern formation and eye development. The polypeptide is Methyl-CpG-binding domain protein 5/6 homolog sba (Drosophila melanogaster (Fruit fly)).